The primary structure comprises 387 residues: S-adenosylmethionine synthase (387 aa).

His19 is a binding site for ATP. Mg(2+) is bound at residue Asp21. Glu47 serves as a coordination point for K(+). Gln103 serves as a coordination point for L-methionine. The tract at residues 103–113 (QSPDIAQGVEL) is flexible loop. ATP-binding positions include 167–169 (DMK), 233–234 (RF), Asp242, 248–249 (RK), Ala265, and Lys269. Position 242 (Asp242) interacts with L-methionine. Position 273 (Lys273) interacts with L-methionine.

The protein belongs to the AdoMet synthase family. As to quaternary structure, homotetramer; dimer of dimers. Requires Mg(2+) as cofactor. The cofactor is K(+).

The protein resides in the cytoplasm. It catalyses the reaction L-methionine + ATP + H2O = S-adenosyl-L-methionine + phosphate + diphosphate. The protein operates within amino-acid biosynthesis; S-adenosyl-L-methionine biosynthesis; S-adenosyl-L-methionine from L-methionine: step 1/1. Its function is as follows. Catalyzes the formation of S-adenosylmethionine (AdoMet) from methionine and ATP. The overall synthetic reaction is composed of two sequential steps, AdoMet formation and the subsequent tripolyphosphate hydrolysis which occurs prior to release of AdoMet from the enzyme. The polypeptide is S-adenosylmethionine synthase (Mycoplasma capricolum subsp. capricolum (strain California kid / ATCC 27343 / NCTC 10154)).